The primary structure comprises 294 residues: Porphobilinogen deaminase (294 aa).

S-(dipyrrolylmethanemethyl)cysteine is present on cysteine 232.

The protein belongs to the HMBS family. In terms of assembly, monomer. Dipyrromethane is required as a cofactor.

The catalysed reaction is 4 porphobilinogen + H2O = hydroxymethylbilane + 4 NH4(+). It participates in porphyrin-containing compound metabolism; protoporphyrin-IX biosynthesis; coproporphyrinogen-III from 5-aminolevulinate: step 2/4. Tetrapolymerization of the monopyrrole PBG into the hydroxymethylbilane pre-uroporphyrinogen in several discrete steps. The sequence is that of Porphobilinogen deaminase from Corynebacterium diphtheriae (strain ATCC 700971 / NCTC 13129 / Biotype gravis).